The primary structure comprises 237 residues: Octopine transport system permease protein OccQ (237 aa).

Residues 22 to 222 enclose the ABC transmembrane type-1 domain; that stretch reads TAMTMAVAFS…LITFVSGQVF (201 aa). 4 consecutive transmembrane segments (helical) span residues 26–46, 72–92, 96–116, and 202–222; these read MAVA…GAAA, LVIY…ASLF, GFVG…VSGA, and SFYL…GQVF.

The protein belongs to the binding-protein-dependent transport system permease family. HisMQ subfamily.

The protein localises to the cell inner membrane. Functionally, component of the octopine active transport system probably consisting of four subunits: Q, M, P and T. The polypeptide is Octopine transport system permease protein OccQ (occQ) (Agrobacterium tumefaciens (strain Ach5)).